Consider the following 555-residue polypeptide: Formate--tetrahydrofolate ligase (555 aa).

An ATP-binding site is contributed by 65–72 (TPAGEGKS).

The protein belongs to the formate--tetrahydrofolate ligase family.

It catalyses the reaction (6S)-5,6,7,8-tetrahydrofolate + formate + ATP = (6R)-10-formyltetrahydrofolate + ADP + phosphate. It participates in one-carbon metabolism; tetrahydrofolate interconversion. This Staphylococcus aureus (strain MRSA252) protein is Formate--tetrahydrofolate ligase.